A 593-amino-acid polypeptide reads, in one-letter code: UvrABC system protein C (593 aa).

The GIY-YIG domain maps to 17 to 94; it reads MEPGCYLMKD…IKQYQPRYNI (78 aa). The UVR domain maps to 199–234; it reads KTILKSLEERMLTASESLDFERAKEYRDLIQHIQNL.

The protein belongs to the UvrC family. As to quaternary structure, interacts with UvrB in an incision complex.

It localises to the cytoplasm. Functionally, the UvrABC repair system catalyzes the recognition and processing of DNA lesions. UvrC both incises the 5' and 3' sides of the lesion. The N-terminal half is responsible for the 3' incision and the C-terminal half is responsible for the 5' incision. The protein is UvrABC system protein C of Staphylococcus aureus (strain bovine RF122 / ET3-1).